Consider the following 283-residue polypeptide: 4-diphosphocytidyl-2-C-methyl-D-erythritol kinase (283 aa).

Lys-10 is a catalytic residue. 95-105 (PVAAGLGGGSS) contacts ATP. Asp-137 is an active-site residue.

It belongs to the GHMP kinase family. IspE subfamily.

The enzyme catalyses 4-CDP-2-C-methyl-D-erythritol + ATP = 4-CDP-2-C-methyl-D-erythritol 2-phosphate + ADP + H(+). It participates in isoprenoid biosynthesis; isopentenyl diphosphate biosynthesis via DXP pathway; isopentenyl diphosphate from 1-deoxy-D-xylulose 5-phosphate: step 3/6. Functionally, catalyzes the phosphorylation of the position 2 hydroxy group of 4-diphosphocytidyl-2C-methyl-D-erythritol. The polypeptide is 4-diphosphocytidyl-2-C-methyl-D-erythritol kinase (Limosilactobacillus reuteri (strain DSM 20016) (Lactobacillus reuteri)).